A 380-amino-acid polypeptide reads, in one-letter code: Cell division protein FtsZ 2 (380 aa).

GTP contacts are provided by residues 47–51 (GAGNN), 134–136 (GTG), Glu-165, Arg-168, and Asp-211.

The protein belongs to the FtsZ family. Homodimer. Polymerizes to form a dynamic ring structure in a strictly GTP-dependent manner. Interacts directly with several other division proteins.

It is found in the cytoplasm. Its function is as follows. Essential cell division protein that forms a contractile ring structure (Z ring) at the future cell division site. The regulation of the ring assembly controls the timing and the location of cell division. One of the functions of the FtsZ ring is to recruit other cell division proteins to the septum to produce a new cell wall between the dividing cells. Binds GTP and shows GTPase activity. The polypeptide is Cell division protein FtsZ 2 (Methanocaldococcus jannaschii (strain ATCC 43067 / DSM 2661 / JAL-1 / JCM 10045 / NBRC 100440) (Methanococcus jannaschii)).